A 125-amino-acid polypeptide reads, in one-letter code: Prepro-urotensin II-gamma (125 aa).

The first 21 residues, 1-21 (MMCNLLLSCSVLLLSCSHLLA), serve as a signal peptide directing secretion. Residues 109–111 (QFR) constitute a propeptide that is removed on maturation. Cys-119 and Cys-124 form a disulfide bridge.

Belongs to the urotensin-2 family.

The protein resides in the secreted. In terms of biological role, urotensin is found in the teleost caudal neurosecretory system. It has a suggested role in osmoregulation and as a corticotropin-releasing factor. The non-hormonal portion of this precursor may be a urotensin binding protein, urophysin. The protein is Prepro-urotensin II-gamma of Cyprinus carpio (Common carp).